The sequence spans 476 residues: MKDTFVEKVDDFVKQHDVLKNDSTIVVGVSGGPDSLALLYYLLEKRAEKQLEIVVAHVDHMFRGDESYEDLQFVQGLCEELGIICETIRINVSQYQQQYGMNAQVAARECRYAFLERIMKKYDARYVALGHHGDDQVETILMRLVRGSTPKGYAGIAVKRPFHNGYLIRPLLGVTKEEIVDYCNKLNLMPRIDPSNKKEVYTRNRLRKYVLPHLKEENPQMHEKFQKFSVQMQEDEAYLQELAFEKMNKVITKKSDKQISLSIPAFESMSMPLQRRGIQLILNYLYEYKIPSSLSSIHIDKLIEFFKRTQPSGSLDFPGDLKIVRSYEECSFRFKQEIVSPFSQDLLVPGTITLLNGDKFVTEVSEDIPSNMNETVFVAKYNDISYPLRIRSRENGDRMSIQGMNGTKKIKAIFIEAKVPKEKREEWPVVCDASGTIIWVPLLKRSAFAISKEMAKKDKYMIIHYKSKESSGRIMK.

Position 30–35 (30–35) interacts with ATP; it reads SGGPDS.

This sequence belongs to the tRNA(Ile)-lysidine synthase family.

Its subcellular location is the cytoplasm. It catalyses the reaction cytidine(34) in tRNA(Ile2) + L-lysine + ATP = lysidine(34) in tRNA(Ile2) + AMP + diphosphate + H(+). Functionally, ligates lysine onto the cytidine present at position 34 of the AUA codon-specific tRNA(Ile) that contains the anticodon CAU, in an ATP-dependent manner. Cytidine is converted to lysidine, thus changing the amino acid specificity of the tRNA from methionine to isoleucine. The polypeptide is tRNA(Ile)-lysidine synthase (Bacillus cereus (strain ATCC 14579 / DSM 31 / CCUG 7414 / JCM 2152 / NBRC 15305 / NCIMB 9373 / NCTC 2599 / NRRL B-3711)).